A 331-amino-acid polypeptide reads, in one-letter code: 2-hydroxyacid dehydrogenase homolog (331 aa).

NAD(+)-binding positions include 154 to 155 (HI), 234 to 236 (TSR), and Asp-260. Arg-236 is a catalytic residue. Residue Glu-265 is part of the active site. Residue His-297 is the Proton donor of the active site. 297–300 (HQAF) is a binding site for NAD(+).

This sequence belongs to the D-isomer specific 2-hydroxyacid dehydrogenase family.

This is 2-hydroxyacid dehydrogenase homolog (ddh) from Zymomonas mobilis subsp. mobilis (strain ATCC 31821 / ZM4 / CP4).